The primary structure comprises 151 residues: MSTPENPSVSFFSLFRRGQLYAKTWPLEKRLAPVFVDNRVIRITRYAIRFMPPIAVFTLCWQIALGGQLGPAVATALFALSLPMQGLWWLGKRSVTPLPPTILNWFYEVRGKLQEAGQALAPVEGKPDYQALADTLKRAFKQLDKTFLDDL.

The next 2 membrane-spanning stretches (helical) occupy residues 46-65 (YAIRFMPPIAVFTLCWQIAL) and 69-91 (LGPAVATALFALSLPMQGLWWLG).

Belongs to the UPF0208 family.

The protein resides in the cell inner membrane. The protein is UPF0208 membrane protein Ent638_2839 of Enterobacter sp. (strain 638).